The chain runs to 609 residues: UvrABC system protein C (609 aa).

Residues 19–97 (ASPGCYLWKS…IKKHNPRFNV (79 aa)) form the GIY-YIG domain. The 36-residue stretch at 208 to 243 (ESLVSDLNIKMSNASERLDFEKAARYRDMLQRIQNF) folds into the UVR domain.

The protein belongs to the UvrC family. As to quaternary structure, interacts with UvrB in an incision complex.

It localises to the cytoplasm. The UvrABC repair system catalyzes the recognition and processing of DNA lesions. UvrC both incises the 5' and 3' sides of the lesion. The N-terminal half is responsible for the 3' incision and the C-terminal half is responsible for the 5' incision. The chain is UvrABC system protein C from Leptospira interrogans serogroup Icterohaemorrhagiae serovar Lai (strain 56601).